We begin with the raw amino-acid sequence, 220 residues long: uncharacterized protein (220 aa).

A run of 4 helical transmembrane segments spans residues 9 to 29 (LWITLAILTLVVMINIHGSTQ), 54 to 74 (YAVHGMRFFALFFWLVPFLAV), 105 to 125 (VQGIAFVVLICLPLLTAIHLW), and 177 to 197 (VLAVILTAVSVYLTLRLVIEM).

Its subcellular location is the cell membrane. This is an uncharacterized protein from Sinorhizobium fredii (strain NBRC 101917 / NGR234).